Reading from the N-terminus, the 359-residue chain is Dual-specificity RNA methyltransferase RlmN (359 aa).

Catalysis depends on Glu-102, which acts as the Proton acceptor. One can recognise a Radical SAM core domain in the interval 108-351 (EKKRATLCIS…IRKNRGSDIQ (244 aa)). A disulfide bond links Cys-115 and Cys-354. Residues Cys-122, Cys-126, and Cys-129 each coordinate [4Fe-4S] cluster. S-adenosyl-L-methionine is bound by residues 178–179 (GE), Ser-210, 232–234 (SLH), and Asn-311. Cys-354 serves as the catalytic S-methylcysteine intermediate.

This sequence belongs to the radical SAM superfamily. RlmN family. [4Fe-4S] cluster serves as cofactor.

It is found in the cytoplasm. The enzyme catalyses adenosine(2503) in 23S rRNA + 2 reduced [2Fe-2S]-[ferredoxin] + 2 S-adenosyl-L-methionine = 2-methyladenosine(2503) in 23S rRNA + 5'-deoxyadenosine + L-methionine + 2 oxidized [2Fe-2S]-[ferredoxin] + S-adenosyl-L-homocysteine. The catalysed reaction is adenosine(37) in tRNA + 2 reduced [2Fe-2S]-[ferredoxin] + 2 S-adenosyl-L-methionine = 2-methyladenosine(37) in tRNA + 5'-deoxyadenosine + L-methionine + 2 oxidized [2Fe-2S]-[ferredoxin] + S-adenosyl-L-homocysteine. Specifically methylates position 2 of adenine 2503 in 23S rRNA and position 2 of adenine 37 in tRNAs. m2A2503 modification seems to play a crucial role in the proofreading step occurring at the peptidyl transferase center and thus would serve to optimize ribosomal fidelity. This Buchnera aphidicola subsp. Cinara cedri (strain Cc) protein is Dual-specificity RNA methyltransferase RlmN.